We begin with the raw amino-acid sequence, 360 residues long: Phenylalanine--tRNA ligase alpha subunit (360 aa).

Residue E260 coordinates Mg(2+).

The protein belongs to the class-II aminoacyl-tRNA synthetase family. Phe-tRNA synthetase alpha subunit type 1 subfamily. As to quaternary structure, tetramer of two alpha and two beta subunits. It depends on Mg(2+) as a cofactor.

The protein resides in the cytoplasm. It catalyses the reaction tRNA(Phe) + L-phenylalanine + ATP = L-phenylalanyl-tRNA(Phe) + AMP + diphosphate + H(+). In Rhizobium johnstonii (strain DSM 114642 / LMG 32736 / 3841) (Rhizobium leguminosarum bv. viciae), this protein is Phenylalanine--tRNA ligase alpha subunit.